The following is a 171-amino-acid chain: Shikimate kinase (171 aa).

ATP is bound at residue 14–19 (GAGKST). Ser-18 contributes to the Mg(2+) binding site. The substrate site is built by Asp-36, Arg-60, and Gly-82. Arg-120 is a binding site for ATP. Position 139 (Arg-139) interacts with substrate. An ATP-binding site is contributed by Gln-156.

Belongs to the shikimate kinase family. As to quaternary structure, monomer. Requires Mg(2+) as cofactor.

The protein localises to the cytoplasm. The catalysed reaction is shikimate + ATP = 3-phosphoshikimate + ADP + H(+). Its pathway is metabolic intermediate biosynthesis; chorismate biosynthesis; chorismate from D-erythrose 4-phosphate and phosphoenolpyruvate: step 5/7. In terms of biological role, catalyzes the specific phosphorylation of the 3-hydroxyl group of shikimic acid using ATP as a cosubstrate. This chain is Shikimate kinase, found in Shewanella sediminis (strain HAW-EB3).